The primary structure comprises 169 residues: Small ribosomal subunit protein uS13m (169 aa).

A disordered region spans residues Lys149–Lys169. Residues Lys150 to Lys161 are compositionally biased toward basic and acidic residues.

The protein belongs to the universal ribosomal protein uS13 family. Part of the small ribosomal subunit.

The protein localises to the mitochondrion. Its function is as follows. Located at the top of the head of the small subunit, it contacts several helices of the small subunit rRNA. The sequence is that of Small ribosomal subunit protein uS13m (mrps13) from Dictyostelium discoideum (Social amoeba).